A 263-amino-acid polypeptide reads, in one-letter code: MPEVLAVRAWPLLLSLAVQLGATVGAPQPWRCAPCSAERMALCPPVPASCPELTRSAGCGCCPMCALPLGAACGVATARCARGLSCRALPGEPRPLHALTRGQGACMTTPSDEATDTKDTTSPENVSPESSEITQEQLLDNFHLMAESSEDLPILWNAISNYESLRALEISDVKKWKEPCQRELYKVLDRLAREQQKAGDKLYKFYLPNCNKNGFYHSKQCETSLEGEPGLCWCVYPWSGKRILGSVAVRGDPKCQQYFNLQN.

The signal sequence occupies residues 1–25 (MPEVLAVRAWPLLLSLAVQLGATVG). The IGFBP N-terminal domain occupies 28–109 (QPWRCAPCSA…TRGQGACMTT (82 aa)). Disulfide bonds link Cys-32–Cys-59, Cys-35–Cys-61, Cys-43–Cys-62, Cys-50–Cys-65, Cys-73–Cys-86, and Cys-80–Cys-106. The interval 102–131 (GQGACMTTPSDEATDTKDTTSPENVSPESS) is disordered. Residues Ser-122, Ser-127, Ser-130, Ser-148, and Ser-160 each carry the phosphoserine modification. Polar residues predominate over residues 122–131 (SPENVSPESS). Phosphotyrosine is present on Tyr-162. The Thyroglobulin type-1 domain occupies 177–255 (KEPCQRELYK…SVAVRGDPKC (79 aa)). 3 cysteine pairs are disulfide-bonded: Cys-180/Cys-210, Cys-221/Cys-232, and Cys-234/Cys-255. Ser-246 carries the post-translational modification Phosphoserine. The Cell attachment site motif lies at 250–252 (RGD).

Binds equally well IGF1 and IGF2. Interacts with integrin ITGA5:ITGB1. Interacts with VHL; this interaction inhibits HIF1A degradation.

It localises to the secreted. Multifunctional protein that plays a critical role in regulating the availability of IGFs such as IGF1 and IGF2 to their receptors and thereby regulates IGF-mediated cellular processes including cell migration, proliferation, differentiation or apoptosis in a cell-type specific manner. Also plays a positive role in cell migration by interacting with integrin ITGA5:ITGB1 through its RGD motif. Mechanistically, binding to integrins leads to activation of focal adhesion kinase/PTK2 and stimulation of the mitogen-activated protein kinase (MAPK) pathway. Regulates cardiomyocyte apoptosis by suppressing HIF-1alpha/HIF1A degradation through ubiquitination. In Bos taurus (Bovine), this protein is Insulin-like growth factor-binding protein 1 (IGFBP1).